The primary structure comprises 43 residues: Protein PsbN (43 aa).

A helical transmembrane segment spans residues 5–27; that stretch reads TLIAISISGLLVSFTGYALYTAF.

This sequence belongs to the PsbN family.

The protein resides in the plastid. Its subcellular location is the chloroplast thylakoid membrane. May play a role in photosystem I and II biogenesis. The polypeptide is Protein PsbN (Phaseolus vulgaris (Kidney bean)).